A 249-amino-acid chain; its full sequence is 5'-nucleotidase SurE (249 aa).

Residues Asp9, Asp10, Ser40, and Asn92 each contribute to the a divalent metal cation site.

The protein belongs to the SurE nucleotidase family. A divalent metal cation is required as a cofactor.

The protein localises to the cytoplasm. The catalysed reaction is a ribonucleoside 5'-phosphate + H2O = a ribonucleoside + phosphate. Nucleotidase that shows phosphatase activity on nucleoside 5'-monophosphates. The polypeptide is 5'-nucleotidase SurE (Shewanella oneidensis (strain ATCC 700550 / JCM 31522 / CIP 106686 / LMG 19005 / NCIMB 14063 / MR-1)).